We begin with the raw amino-acid sequence, 228 residues long: MDNNFKIKDLPKNERPQERLIRYGAEVLSNSELLAVILRTGTKNQNIMMLASSLIKETGGLDQLFNQSIEELTKIKGIGVTKAVQILALSELSKRFKTYKSGNEYKINTPLDVSNLVMEDMKYLKQEKLKILILNTKNIVTYIRDVFIGTLNSSIVHPREIFCEAIKKNGASIIICHNHPSGDPTPSKEDINITLRLKECGKLIGIDLLDHIIIGENKYVSMKEKGTI.

The MPN domain maps to 106-228 (KINTPLDVSN…YVSMKEKGTI (123 aa)). 3 residues coordinate Zn(2+): H177, H179, and D190. Residues 177 to 190 (HNHPSGDPTPSKED) carry the JAMM motif motif.

Belongs to the UPF0758 family.

This chain is UPF0758 protein CLD_1541, found in Clostridium botulinum (strain Okra / Type B1).